We begin with the raw amino-acid sequence, 255 residues long: Ornithine decarboxylase antizyme (255 aa).

It belongs to the ODC antizyme family. In terms of assembly, interacts with ODC and thereby sterically blocks ODC homodimerization.

Ornithine decarboxylase (ODC) antizyme protein that negatively regulates ODC activity and intracellular polyamine biosynthesis in response to increased intracellular polyamine levels. Binds to ODC monomers, inhibiting the assembly of the functional ODC homodimer, and targets the monomers for ubiquitin-independent proteolytic destruction by the 26S proteasome. This chain is Ornithine decarboxylase antizyme (OAZ1), found in Candida glabrata (strain ATCC 2001 / BCRC 20586 / JCM 3761 / NBRC 0622 / NRRL Y-65 / CBS 138) (Yeast).